Reading from the N-terminus, the 157-residue chain is MEKVPMTARGEQLLRKELERLLKRRPLITEAIAEARELGDLKENAEYHAAREEQGICEAQIRDIEYKLSVAQVIDVSKMENNGKVIFGATVTLIDCDTEEEKTYQIVGDDEADIKSGRISVNSPIARGLIGKMEGDEVAISTPGGMKDFEIDSVEYR.

Residues 14 to 37 are a coiled coil; sequence LRKELERLLKRRPLITEAIAEARE.

Belongs to the GreA/GreB family.

Its function is as follows. Necessary for efficient RNA polymerase transcription elongation past template-encoded arresting sites. The arresting sites in DNA have the property of trapping a certain fraction of elongating RNA polymerases that pass through, resulting in locked ternary complexes. Cleavage of the nascent transcript by cleavage factors such as GreA or GreB allows the resumption of elongation from the new 3'terminus. GreA releases sequences of 2 to 3 nucleotides. The protein is Transcription elongation factor GreA of Vibrio vulnificus (strain CMCP6).